A 177-amino-acid polypeptide reads, in one-letter code: PLAC8-like protein 1 (177 aa).

The protein belongs to the cornifelin family.

The chain is PLAC8-like protein 1 (PLAC8L1) from Homo sapiens (Human).